The following is a 665-amino-acid chain: Methionine--tRNA ligase (665 aa).

Positions 12-22 (YYPSGKLHIGS) match the 'HIGH' region motif. Residues 308–312 (KMSKS) carry the 'KMSKS' region motif. Position 311 (Lys-311) interacts with ATP. A tRNA-binding domain is found at 562 to 665 (TFDAVEIRVA…SSVPNGSIIG (104 aa)).

The protein belongs to the class-I aminoacyl-tRNA synthetase family. MetG type 2B subfamily. In terms of assembly, homodimer.

It is found in the cytoplasm. The enzyme catalyses tRNA(Met) + L-methionine + ATP = L-methionyl-tRNA(Met) + AMP + diphosphate. Is required not only for elongation of protein synthesis but also for the initiation of all mRNA translation through initiator tRNA(fMet) aminoacylation. This is Methionine--tRNA ligase (metG) from Streptococcus pyogenes serotype M3 (strain SSI-1).